The following is a 376-amino-acid chain: Probable plastid-lipid-associated protein 3, chloroplastic (376 aa).

The transit peptide at 1–53 directs the protein to the chloroplast; that stretch reads MATLFTVARPSSLLYVSSINPSKTFSPSISLKLNSLSFSFGYRPKPLRFSKIR. The segment at 54–146 is disordered; the sequence is SSLPSESESE…EADAGNGSAV (93 aa). Over residues 85–96 the composition is skewed to polar residues; sequence PDSQPDNVTVNV. Basic and acidic residues predominate over residues 117-126; the sequence is MESDPPRNED.

Belongs to the PAP/fibrillin family.

It is found in the plastid. It localises to the chloroplast. Its subcellular location is the plastoglobule. Probably involved in light/cold stress-related jasmonate (JA) biosynthesis. This Arabidopsis thaliana (Mouse-ear cress) protein is Probable plastid-lipid-associated protein 3, chloroplastic (PAP3).